The primary structure comprises 313 residues: Protein YABBY 3 (313 aa).

The segment at 65–92 (CHYCDTVLVVSVPSSSLFETVTVRCGHC) adopts a C4-type zinc-finger fold. Disordered stretches follow at residues 107 to 149 (TTAA…SLLD) and 180 to 221 (NNSP…KRQR). Positions 112-128 (APPPPPPPPPPPPPPAA) are enriched in pro residues.

The protein belongs to the YABBY family. Expressed in shoot apex and young inflorescences.

The protein localises to the nucleus. The protein is Protein YABBY 3 (YAB3) of Oryza sativa subsp. japonica (Rice).